The sequence spans 43 residues: Gene 75 protein (43 aa).

The chain is Gene 75 protein (75) from Mycobacterium (Mycobacteriophage L5).